A 752-amino-acid chain; its full sequence is DNA topoisomerase 4 subunit A (752 aa).

Positions Leu31–Met494 constitute a Topo IIA-type catalytic domain. Catalysis depends on Tyr120, which acts as the O-(5'-phospho-DNA)-tyrosine intermediate. The disordered stretch occupies residues Tyr472–His492. Residues Gly473–His492 are compositionally biased toward basic and acidic residues.

This sequence belongs to the type II topoisomerase GyrA/ParC subunit family. ParC type 1 subfamily. In terms of assembly, heterotetramer composed of ParC and ParE.

Its subcellular location is the cell membrane. It catalyses the reaction ATP-dependent breakage, passage and rejoining of double-stranded DNA.. Topoisomerase IV is essential for chromosome segregation. It relaxes supercoiled DNA. Performs the decatenation events required during the replication of a circular DNA molecule. The polypeptide is DNA topoisomerase 4 subunit A (Salmonella typhimurium (strain LT2 / SGSC1412 / ATCC 700720)).